A 1233-amino-acid chain; its full sequence is ATP-dependent helicase/nuclease subunit A (1233 aa).

Residues 3–474 (TKWTEEQKQA…ILLYKNFRSR (472 aa)) enclose the UvrD-like helicase ATP-binding domain. Position 24–31 (24–31 (AAAGSGKT)) interacts with ATP. A UvrD-like helicase C-terminal domain is found at 518–809 (VTGGAVELHL…RIMSIHKSKG (292 aa)). The segment at 533–555 (VEEEVEEKEEEKNEEKDFEEEEE) is disordered.

The protein belongs to the helicase family. AddA subfamily. Heterodimer of AddA and AddB/RexB. It depends on Mg(2+) as a cofactor.

It carries out the reaction Couples ATP hydrolysis with the unwinding of duplex DNA by translocating in the 3'-5' direction.. The enzyme catalyses ATP + H2O = ADP + phosphate + H(+). Its function is as follows. The heterodimer acts as both an ATP-dependent DNA helicase and an ATP-dependent, dual-direction single-stranded exonuclease. Recognizes the chi site generating a DNA molecule suitable for the initiation of homologous recombination. The AddA nuclease domain is required for chi fragment generation; this subunit has the helicase and 3' -&gt; 5' nuclease activities. In Thermoanaerobacter sp. (strain X514), this protein is ATP-dependent helicase/nuclease subunit A.